The chain runs to 208 residues: Small ribosomal subunit protein uS4 (208 aa).

The tract at residues 30-51 (KSSLEKRPYAPGQHGQRRSKIS) is disordered. Residues 98–161 (RRLDNVVYRM…KNNPQVQRSI (64 aa)) form the S4 RNA-binding domain.

It belongs to the universal ribosomal protein uS4 family. Part of the 30S ribosomal subunit. Contacts protein S5. The interaction surface between S4 and S5 is involved in control of translational fidelity.

Functionally, one of the primary rRNA binding proteins, it binds directly to 16S rRNA where it nucleates assembly of the body of the 30S subunit. With S5 and S12 plays an important role in translational accuracy. The sequence is that of Small ribosomal subunit protein uS4 from Wolinella succinogenes (strain ATCC 29543 / DSM 1740 / CCUG 13145 / JCM 31913 / LMG 7466 / NCTC 11488 / FDC 602W) (Vibrio succinogenes).